We begin with the raw amino-acid sequence, 117 residues long: Large ribosomal subunit protein uL24 (117 aa).

It belongs to the universal ribosomal protein uL24 family. In terms of assembly, part of the 50S ribosomal subunit.

One of two assembly initiator proteins, it binds directly to the 5'-end of the 23S rRNA, where it nucleates assembly of the 50S subunit. In terms of biological role, one of the proteins that surrounds the polypeptide exit tunnel on the outside of the subunit. The polypeptide is Large ribosomal subunit protein uL24 (Thermosynechococcus vestitus (strain NIES-2133 / IAM M-273 / BP-1)).